A 459-amino-acid chain; its full sequence is Flavin-containing monooxygenase FMO GS-OX1 (459 aa).

17-22 (GAGAAG) contributes to the FAD binding site. 211–216 (GNYASG) provides a ligand contact to NADP(+).

It belongs to the FMO family. The cofactor is FAD. In terms of tissue distribution, mainly expressed in leaves. Low levels in flowers and seeds.

The catalysed reaction is a (Z)-omega-(methylsulfanyl)-N-sulfo-alkylhydroximate S-glucoside + NADPH + O2 + H(+) = a (Z)-omega-(methylsulfinyl)-alkyl-glucosinolate + NADP(+) + H2O. Catalyzes the conversion of methylthioalkyl glucosinolates into methylsulfinylalkyl glucosinolates. Able to S-oxygenate both desulfo- and intact 4-methylthiobutyl glucosinolates, but no activity with methionine, dihomomethionine or 5-methylthiopentaldoxime. In Arabidopsis thaliana (Mouse-ear cress), this protein is Flavin-containing monooxygenase FMO GS-OX1 (FMOGS-OX1).